Here is a 177-residue protein sequence, read N- to C-terminus: Large ribosomal subunit protein uL6 (177 aa).

This sequence belongs to the universal ribosomal protein uL6 family. As to quaternary structure, part of the 50S ribosomal subunit.

Its function is as follows. This protein binds to the 23S rRNA, and is important in its secondary structure. It is located near the subunit interface in the base of the L7/L12 stalk, and near the tRNA binding site of the peptidyltransferase center. The chain is Large ribosomal subunit protein uL6 from Psychromonas ingrahamii (strain DSM 17664 / CCUG 51855 / 37).